A 607-amino-acid chain; its full sequence is MAFRRQVKNFVKNYSDAEIKVREATSNDPWGPSSSLMLDISDLTFNTISLSEIMNMLWHRLNDHGKNWRHVYKSLTLMDYLIKNGSKKVIQHCREGFCNLQTLKDFQHIDEAGKDQGYYIREKSKQVITLLMDEPLLCKEREVACRTRQRTSHSILFSKRQLGSSNSLTACTSAPTPDISASEKKYKLPKFGRLHNKRNVCKAGLKQEHCQDVHLPTETMLSQETLPLKIHGWKSTEDLMTFLDDDPELPLLATPPSIVSPITCLSEAEEVCNLSGADAVPTLSENSPSGQRDVSLDKRSDGIFTNTVTENLLETPLEKQSAAEGLKTLTILPACWSSKEEFISPDLRVSKSDSTFHNQASVETLCLSPSFKIFDRVKEIVINKAYQKPAQSSIQMDDKILKTTTRVSTASEGASSFSPLSMSSPDLASPEKSAHLLSPILAGPSFWTLSHQQLSSTSFKDEDKTAKLHHSFASRGPVSSDVEENDSLNLLGILPNNSDSAKKNISHISSSHWGEFSTQNVDQFIPLSCSGFQSTKDFPQEPEAKNSISVLLREVKRAIARLHEDLSTVIQELNVINNILMSMSLNSSQISQSSQVPQSSEGSSDQI.

The region spanning 9 to 141 (NFVKNYSDAE…MDEPLLCKER (133 aa)) is the ENTH domain. The stretch at 543 to 574 (EAKNSISVLLREVKRAIARLHEDLSTVIQELN) forms a coiled coil.

The protein is ENTH domain-containing protein 1 (ENTHD1) of Homo sapiens (Human).